Here is a 236-residue protein sequence, read N- to C-terminus: Penton protein H240R (236 aa).

This sequence belongs to the asfivirus H240R family.

The protein localises to the virion. In terms of biological role, forms the penton at the fivefold vertices of the icosahedral capsid. Together with the minor capsid proteins (p17, p49, and M1249L), forms a complicated network immediately below the outer capsid shell, stabilizing the whole capsid. The protein is Penton protein H240R of African swine fever virus (isolate Warthog/Namibia/Wart80/1980) (ASFV).